The chain runs to 486 residues: NADH-quinone oxidoreductase subunit N (486 aa).

The next 14 helical transmembrane spans lie at 8–28, 36–56, 74–94, 104–124, 125–145, 160–180, 204–224, 239–259, 270–290, 298–318, 329–349, 374–394, 407–427, and 459–479; these read LIAL…ILSI, FIAF…YFLI, ILYI…AYPW, EFYL…ISNH, MASL…LIAY, LVLS…IYAI, VLFG…MVPF, VLSF…LYFF, IFLI…LMAI, FFGY…LVSK, GIFL…INLF, ASIV…LGFF, HLWT…YGYL, and ILIF…NPLI.

The protein belongs to the complex I subunit 2 family. As to quaternary structure, NDH-1 is composed of 13 different subunits. Subunits NuoA, H, J, K, L, M, N constitute the membrane sector of the complex.

It localises to the cell membrane. It catalyses the reaction a quinone + NADH + 5 H(+)(in) = a quinol + NAD(+) + 4 H(+)(out). NDH-1 shuttles electrons from NADH, via FMN and iron-sulfur (Fe-S) centers, to quinones in the respiratory chain. The immediate electron acceptor for the enzyme in this species is believed to be ubiquinone. Couples the redox reaction to proton translocation (for every two electrons transferred, four hydrogen ions are translocated across the cytoplasmic membrane), and thus conserves the redox energy in a proton gradient. The polypeptide is NADH-quinone oxidoreductase subunit N (Buchnera aphidicola subsp. Schizaphis graminum (strain Sg)).